Reading from the N-terminus, the 217-residue chain is MAPGSWFSPLFIAVITLGLQWPKEAATFPAMPLSNLFANAVLRAQHLHLLAAETYKEFERTYIPEEQRHANKNSQSAFCYSETIPAPTGKDDAQQKSDMELLRFSLVLIQSWLTPVQYLSKVFTNNLVFGTSDRVYEKLKDLEEGIQALMRELEDRSSRGPPLLRSTYDKFDIHLRNEEALLKNYGLPSCFKKDLHKVETYLKVMKCRRFGESNCTI.

The first 26 residues, 1-26, serve as a signal peptide directing secretion; the sequence is MAPGSWFSPLFIAVITLGLQWPKEAA. His46 contributes to the Zn(2+) binding site. An intrachain disulfide couples Cys79 to Cys190. Glu199 contributes to the Zn(2+) binding site. Cysteines 207 and 215 form a disulfide.

It belongs to the somatotropin/prolactin family.

Its subcellular location is the secreted. In terms of biological role, growth hormone plays an important role in growth control. The sequence is that of Somatotropin (GH) from Struthio camelus (Common ostrich).